The sequence spans 156 residues: MKCPFCGSMDTRVLDSRPTLDGTAIRRRRECSSCGKRFTTYERYEEAPVLVVKKDGRREKFDREKIKNGMIKACEKRPVTYEQIEEAVNRICLKLREEGSFEVETKRIGELVMEELKKLDQVAYVRLASVYRDFREVDQFLEIVKELKREKEGEEQ.

A zinc finger spans residues 3 to 34 (CPFCGSMDTRVLDSRPTLDGTAIRRRRECSSC). One can recognise an ATP-cone domain in the interval 49–139 (VLVVKKDGRR…VYRDFREVDQ (91 aa)).

It belongs to the NrdR family. Zn(2+) is required as a cofactor.

Negatively regulates transcription of bacterial ribonucleotide reductase nrd genes and operons by binding to NrdR-boxes. The protein is Transcriptional repressor NrdR of Thermotoga maritima (strain ATCC 43589 / DSM 3109 / JCM 10099 / NBRC 100826 / MSB8).